A 197-amino-acid polypeptide reads, in one-letter code: Alkyl hydroperoxide reductase C (197 aa).

The Thioredoxin domain occupies 2 to 163 (VLVTQNAPNF…MIRMVDALDF (162 aa)). Cys-50 functions as the Cysteine sulfenic acid (-SOH) intermediate in the catalytic mechanism.

The protein belongs to the peroxiredoxin family. AhpC/Prx1 subfamily. As to quaternary structure, homodimer; disulfide-linked, upon oxidation. 5 homodimers assemble to form a ring-like decamer.

The protein localises to the cytoplasm. The enzyme catalyses a hydroperoxide + NADH + H(+) = an alcohol + NAD(+) + H2O. Thiol-specific peroxidase that catalyzes the reduction of hydrogen peroxide and organic hydroperoxides to water and alcohols, respectively. Plays a role in cell protection against oxidative stress by detoxifying peroxides. The chain is Alkyl hydroperoxide reductase C from Buchnera aphidicola subsp. Acyrthosiphon pisum (strain APS) (Acyrthosiphon pisum symbiotic bacterium).